The chain runs to 302 residues: 33 kDa chaperonin (302 aa).

2 disulfide bridges follow: Cys-240–Cys-242 and Cys-273–Cys-276.

It belongs to the HSP33 family. Post-translationally, under oxidizing conditions two disulfide bonds are formed involving the reactive cysteines. Under reducing conditions zinc is bound to the reactive cysteines and the protein is inactive.

The protein resides in the cytoplasm. In terms of biological role, redox regulated molecular chaperone. Protects both thermally unfolding and oxidatively damaged proteins from irreversible aggregation. Plays an important role in the bacterial defense system toward oxidative stress. In Synechocystis sp. (strain ATCC 27184 / PCC 6803 / Kazusa), this protein is 33 kDa chaperonin.